The following is a 194-amino-acid chain: Protein GrpE (194 aa).

It belongs to the GrpE family. As to quaternary structure, homodimer.

It localises to the cytoplasm. Participates actively in the response to hyperosmotic and heat shock by preventing the aggregation of stress-denatured proteins, in association with DnaK and GrpE. It is the nucleotide exchange factor for DnaK and may function as a thermosensor. Unfolded proteins bind initially to DnaJ; upon interaction with the DnaJ-bound protein, DnaK hydrolyzes its bound ATP, resulting in the formation of a stable complex. GrpE releases ADP from DnaK; ATP binding to DnaK triggers the release of the substrate protein, thus completing the reaction cycle. Several rounds of ATP-dependent interactions between DnaJ, DnaK and GrpE are required for fully efficient folding. This chain is Protein GrpE, found in Aliivibrio fischeri (strain MJ11) (Vibrio fischeri).